The following is a 266-amino-acid chain: Small ribosomal subunit protein uS3 (266 aa).

Residues 39 to 107 (VREYLKKKLK…PVHVNIEEIR (69 aa)) enclose the KH type-2 domain. The disordered stretch occupies residues 218-266 (EVAEDKRPRRNARPGDRRPRRDGEGGAPGARRGAPRRGAGKPEDGKTGE). Basic and acidic residues-rich tracts occupy residues 230-241 (RPGDRRPRRDGE) and 257-266 (GKPEDGKTGE).

It belongs to the universal ribosomal protein uS3 family. As to quaternary structure, part of the 30S ribosomal subunit. Forms a tight complex with proteins S10 and S14.

Binds the lower part of the 30S subunit head. Binds mRNA in the 70S ribosome, positioning it for translation. The sequence is that of Small ribosomal subunit protein uS3 from Burkholderia ambifaria (strain MC40-6).